We begin with the raw amino-acid sequence, 171 residues long: Thioredoxin-2 (171 aa).

The region spanning 41-169 is the Thioredoxin domain; sequence AFNASPSTSQ…LQALISANHP (129 aa). Cysteines 95 and 98 form a disulfide.

It belongs to the thioredoxin family.

The protein resides in the cytoplasm. Its subcellular location is the vacuole. Thioredoxin involved in responses to oxidative and cell wall stresses. Plays an important role in appressorium formation on hyphal tips. TRX2 may affect invasive growth via the MST11-MST7-PMK1 pathway since it is required for the proper folding or dimerization of MAPKK MST7. The polypeptide is Thioredoxin-2 (Pyricularia oryzae (strain 70-15 / ATCC MYA-4617 / FGSC 8958) (Rice blast fungus)).